The primary structure comprises 155 residues: Small ribosomal subunit protein uS7cz/uS7cy (155 aa).

Belongs to the universal ribosomal protein uS7 family. As to quaternary structure, part of the 30S ribosomal subunit.

It is found in the plastid. Its subcellular location is the chloroplast. Its function is as follows. One of the primary rRNA binding proteins, it binds directly to 16S rRNA where it nucleates assembly of the head domain of the 30S subunit. This is Small ribosomal subunit protein uS7cz/uS7cy (rps7-A) from Calycanthus floridus var. glaucus (Eastern sweetshrub).